The primary structure comprises 89 residues: MVNMKSVALIVIVMMAFMMVDPSMGAGECVQGRCPSGMCCSQFGYCGRGPKYCGRASTTVDHQADAAAAAATKTANNPTDAKLAGAGSP.

A signal peptide spans 1–25 (MVNMKSVALIVIVMMAFMMVDPSMG). Residues 26 to 68 (AGECVQGRCPSGMCCSQFGYCGRGPKYCGRASTTVDHQADAAA) form the Chitin-binding type-1 domain. Disulfide bonds link C29–C40, C34–C46, and C39–C53. The propeptide at 56 to 89 (ASTTVDHQADAAAAAATKTANNPTDAKLAGAGSP) is removed in mature form.

Chitin-binding protein that inhibits the growth of the fungal pathogens B.cinerea, F.culmorum, H.sativum and A.consortiale, but not that of R.solani. Induces morphological changes in the fungal pathogens F.culmorum, H.sativum and R.solani, but not in A.consortiale and B.cinerea. Has antibacterial activity against the Gram-positive bacterium B.subtilis, but lacks antibacterial activity against the Gram-negative bacterium E.coli. The chain is Antimicrobial peptide Ar-AMP from Amaranthus retroflexus (Redroot amaranth).